A 425-amino-acid polypeptide reads, in one-letter code: Glutamate-1-semialdehyde 2,1-aminomutase (425 aa).

Lys-265 bears the N6-(pyridoxal phosphate)lysine mark.

The protein belongs to the class-III pyridoxal-phosphate-dependent aminotransferase family. HemL subfamily. As to quaternary structure, homodimer. It depends on pyridoxal 5'-phosphate as a cofactor.

The protein resides in the cytoplasm. The enzyme catalyses (S)-4-amino-5-oxopentanoate = 5-aminolevulinate. It functions in the pathway porphyrin-containing compound metabolism; protoporphyrin-IX biosynthesis; 5-aminolevulinate from L-glutamyl-tRNA(Glu): step 2/2. This Clostridium perfringens (strain ATCC 13124 / DSM 756 / JCM 1290 / NCIMB 6125 / NCTC 8237 / Type A) protein is Glutamate-1-semialdehyde 2,1-aminomutase.